Reading from the N-terminus, the 225-residue chain is Methyl-CpG-binding domain-containing protein 6 (225 aa).

The segment at 25 to 92 is disordered; sequence GDGTLDSSAK…PGWRVEDKIR (68 aa). In terms of domain architecture, MBD spans 71–146; the sequence is RKRAAPGDNW…ENTYFNPDHF (76 aa).

Homodimer and heterodimer with MBD5. Interacts with DDM1 via its MBD domain. Interacts with NTF2, RPS2C, HDA6 and AGO4. As to expression, expressed in rosette leaves, buds, flowers, stems, mature seeds and roots.

The protein localises to the nucleus. Its subcellular location is the chromosome. The protein resides in the nucleolus. Its function is as follows. Transcriptional regulator that binds CpG, CpNpN and CpNpG (N is A, T, or C) islands in promoters regardless the DNA methylation status. Plays probably a role in gene silencing. May associate with histone deacetylase proteins (HDAC). Required for nucleolar dominance that consist in the silencing of rRNA genes inherited from one progenitor in genetic hybrids. Recruited to rRNA genes in a DRM2-dependent manner. Maintains gene silencing by interacting with RNA binding proteins (e.g. NTF2, RPS2C, HDA6 and AGO4) and by regulating DNA methylation status. In Arabidopsis thaliana (Mouse-ear cress), this protein is Methyl-CpG-binding domain-containing protein 6.